The chain runs to 125 residues: Large ribosomal subunit protein uL22 (125 aa).

The protein belongs to the universal ribosomal protein uL22 family. As to quaternary structure, part of the 50S ribosomal subunit.

This protein binds specifically to 23S rRNA; its binding is stimulated by other ribosomal proteins, e.g. L4, L17, and L20. It is important during the early stages of 50S assembly. It makes multiple contacts with different domains of the 23S rRNA in the assembled 50S subunit and ribosome. Its function is as follows. The globular domain of the protein is located near the polypeptide exit tunnel on the outside of the subunit, while an extended beta-hairpin is found that lines the wall of the exit tunnel in the center of the 70S ribosome. In Thermobifida fusca (strain YX), this protein is Large ribosomal subunit protein uL22.